The following is a 265-amino-acid chain: Serine protease ami (265 aa).

An N-terminal signal peptide occupies residues 1–21; that stretch reads MNVSWALLAVVLVLTVATYEC. N2 carries an N-linked (GlcNAc...) asparagine glycan. A propeptide spans 22-26 (activation peptide); sequence RPRGR. The region spanning 27-254 is the Peptidase S1 domain; the sequence is ILGGQDSKAE…YKSWIMESMY (228 aa). A disulfide bridge links C52 with C68. Catalysis depends on H67, which acts as the Charge relay system. Residues N71, N74, and N108 are each glycosylated (N-linked (GlcNAc...) asparagine). D115 acts as the Charge relay system in catalysis. Intrachain disulfides connect C149/C215, C180/C196, and C205/C230. Catalysis depends on S209, which acts as the Charge relay system. The N-linked (GlcNAc...) asparagine glycan is linked to N255.

It belongs to the peptidase S1 family.

The protein resides in the secreted. In terms of biological role, probable serine protease. The protein is Serine protease ami of Xenopus tropicalis (Western clawed frog).